The chain runs to 285 residues: Pantothenate synthetase (285 aa).

ATP is bound at residue 33–40; that stretch reads MGALHEGH. Histidine 40 functions as the Proton donor in the catalytic mechanism. A (R)-pantoate-binding site is contributed by glutamine 64. Glutamine 64 is a beta-alanine binding site. 150-153 contacts ATP; the sequence is GEKD. Residue glutamine 156 participates in (R)-pantoate binding. Residues alanine 179 and 187–190 each bind ATP; that span reads LSSR.

Belongs to the pantothenate synthetase family. In terms of assembly, homodimer.

It is found in the cytoplasm. The catalysed reaction is (R)-pantoate + beta-alanine + ATP = (R)-pantothenate + AMP + diphosphate + H(+). Its pathway is cofactor biosynthesis; (R)-pantothenate biosynthesis; (R)-pantothenate from (R)-pantoate and beta-alanine: step 1/1. In terms of biological role, catalyzes the condensation of pantoate with beta-alanine in an ATP-dependent reaction via a pantoyl-adenylate intermediate. This chain is Pantothenate synthetase, found in Caulobacter vibrioides (strain ATCC 19089 / CIP 103742 / CB 15) (Caulobacter crescentus).